A 175-amino-acid chain; its full sequence is Nucleoside triphosphate/diphosphate phosphatase (175 aa).

R23 acts as the Proton donor in catalysis. Positions 87, 103, 105, 107, 120, and 123 each coordinate Mg(2+).

The protein belongs to the Ntdp family. Mg(2+) serves as cofactor.

The catalysed reaction is a ribonucleoside 5'-triphosphate + H2O = a ribonucleoside 5'-diphosphate + phosphate + H(+). It catalyses the reaction a ribonucleoside 5'-diphosphate + H2O = a ribonucleoside 5'-phosphate + phosphate + H(+). Functionally, has nucleoside phosphatase activity towards nucleoside triphosphates and nucleoside diphosphates. The chain is Nucleoside triphosphate/diphosphate phosphatase from Listeria innocua serovar 6a (strain ATCC BAA-680 / CLIP 11262).